A 957-amino-acid polypeptide reads, in one-letter code: Glycine dehydrogenase (decarboxylating) (957 aa).

Residue Lys708 is modified to N6-(pyridoxal phosphate)lysine.

Belongs to the GcvP family. The glycine cleavage system is composed of four proteins: P, T, L and H. It depends on pyridoxal 5'-phosphate as a cofactor.

It catalyses the reaction N(6)-[(R)-lipoyl]-L-lysyl-[glycine-cleavage complex H protein] + glycine + H(+) = N(6)-[(R)-S(8)-aminomethyldihydrolipoyl]-L-lysyl-[glycine-cleavage complex H protein] + CO2. In terms of biological role, the glycine cleavage system catalyzes the degradation of glycine. The P protein binds the alpha-amino group of glycine through its pyridoxal phosphate cofactor; CO(2) is released and the remaining methylamine moiety is then transferred to the lipoamide cofactor of the H protein. This chain is Glycine dehydrogenase (decarboxylating), found in Escherichia coli O1:K1 / APEC.